The chain runs to 123 residues: Large ribosomal subunit protein uL29 (123 aa).

This sequence belongs to the universal ribosomal protein uL29 family. Component of the large ribosomal subunit.

The protein localises to the cytoplasm. Its function is as follows. Component of the large ribosomal subunit. The ribosome is a large ribonucleoprotein complex responsible for the synthesis of proteins in the cell. The chain is Large ribosomal subunit protein uL29 (rpl35) from Hippocampus comes (Tiger tail seahorse).